Consider the following 927-residue polypeptide: Probable UDP-N-acetylglucosamine--peptide N-acetylglucosaminyltransferase SPINDLY (927 aa).

The interval 1-31 is disordered; that stretch reads MGRPGMDSSEGRESNGVVPERNGGAVPAKQQ. 11 TPR repeats span residues 34–67, 68–101, 102–135, 143–176, 177–210, 211–244, 252–285, 286–319, 320–353, 355–387, and 388–421; these read GKDT…DEAN, VEAL…DPGN, ACAL…DPSY, AIVL…DSHY, APAY…RPLY, AEAY…SPNF, AIAL…NWHY, ADAM…NPRC, AEAC…KPNF, QSLN…NSTY, and AEAY…DPDS. Residues 422–927 form a catalytic region region; it reads RNAGQNRLLA…KVEANGHISR (506 aa).

The protein belongs to the glycosyltransferase 41 family. O-GlcNAc transferase subfamily.

It localises to the nucleus. The enzyme catalyses L-seryl-[protein] + UDP-N-acetyl-alpha-D-glucosamine = 3-O-(N-acetyl-beta-D-glucosaminyl)-L-seryl-[protein] + UDP + H(+). It catalyses the reaction L-threonyl-[protein] + UDP-N-acetyl-alpha-D-glucosamine = 3-O-(N-acetyl-beta-D-glucosaminyl)-L-threonyl-[protein] + UDP + H(+). The protein operates within protein modification; protein glycosylation. Functionally, probable O-linked N-acetylglucosamine transferase (OGT) involved in various processes such as gibberellin (GA) signaling pathway. OGTs catalyze the addition of nucleotide-activated sugars directly onto the polypeptide through O-glycosidic linkage with the hydroxyl of serine or threonine. Probably acts by adding O-linked sugars to yet unknown proteins. The protein is Probable UDP-N-acetylglucosamine--peptide N-acetylglucosaminyltransferase SPINDLY (SPY) of Oryza sativa subsp. japonica (Rice).